We begin with the raw amino-acid sequence, 121 residues long: Small ribosomal subunit protein uS13 (121 aa).

The tract at residues 94–121 (GLPVRGQNTKNNARTRKGKAVAIAGKKK) is disordered. The span at 106–121 (ARTRKGKAVAIAGKKK) shows a compositional bias: basic residues.

Belongs to the universal ribosomal protein uS13 family. Part of the 30S ribosomal subunit. Forms a loose heterodimer with protein S19. Forms two bridges to the 50S subunit in the 70S ribosome.

Functionally, located at the top of the head of the 30S subunit, it contacts several helices of the 16S rRNA. In the 70S ribosome it contacts the 23S rRNA (bridge B1a) and protein L5 of the 50S subunit (bridge B1b), connecting the 2 subunits; these bridges are implicated in subunit movement. Contacts the tRNAs in the A and P-sites. The polypeptide is Small ribosomal subunit protein uS13 (Streptococcus sanguinis (strain SK36)).